The chain runs to 1314 residues: E3 ubiquitin-protein ligase RNF123 (1314 aa).

A2 is modified (N-acetylalanine). The B30.2/SPRY domain maps to 74–254; it reads VDNEEEESQG…VAFNFGSRPL (181 aa). S675 is subject to Phosphoserine. R683 is subject to Asymmetric dimethylarginine. The interval 968–974 is interaction with NFKB1; the sequence is WILVRLW. The Zn(2+) site is built by C1254, C1257, C1269, H1271, C1274, C1277, C1288, and C1291. The segment at 1254–1292 adopts an RING-type zinc-finger fold; the sequence is CPICYAHPISAVFQPCGHKSCKACINQHLMNNKDCFFCK.

In terms of assembly, component of the KPC complex composed of RNF123/KPC1 and UBAC1/KPC2. Interacts with UBAC1 and CDKN1B via its N-terminal domain. Interacts with RIGI (via N-terminus) and IFIH1 (via N-terminus). Ubiquitinated, leading to its degradation. Deubiquitinated by USP19, thereby stimulating CDKN1B ubiquitin-dependent degradation.

The protein resides in the cytoplasm. The enzyme catalyses S-ubiquitinyl-[E2 ubiquitin-conjugating enzyme]-L-cysteine + [acceptor protein]-L-lysine = [E2 ubiquitin-conjugating enzyme]-L-cysteine + N(6)-ubiquitinyl-[acceptor protein]-L-lysine.. It functions in the pathway protein modification; protein ubiquitination. In terms of biological role, catalytic subunit of the KPC complex that acts as E3 ubiquitin-protein ligase. Promotes the ubiquitination and proteasome-mediated degradation of CDKN1B which is the cyclin-dependent kinase inhibitor at the G0-G1 transition of the cell cycle. Also acts as a key regulator of the NF-kappa-B signaling by promoting maturation of the NFKB1 component of NF-kappa-B: acts by catalyzing ubiquitination of the NFKB1 p105 precursor, leading to limited proteasomal degradation of NFKB1 p105 and generation of the active NFKB1 p50 subunit. Also functions as an inhibitor of innate antiviral signaling mediated by RIGI and IFIH1 independently of its E3 ligase activity. Interacts with the N-terminal CARD domains of RIGI and IFIH1 and competes with the downstream adapter MAVS. The chain is E3 ubiquitin-protein ligase RNF123 from Homo sapiens (Human).